Here is a 430-residue protein sequence, read N- to C-terminus: tRNA(Ile)-lysidine synthase (430 aa).

21-26 (SGGLDS) is an ATP binding site.

The protein belongs to the tRNA(Ile)-lysidine synthase family.

It is found in the cytoplasm. It catalyses the reaction cytidine(34) in tRNA(Ile2) + L-lysine + ATP = lysidine(34) in tRNA(Ile2) + AMP + diphosphate + H(+). In terms of biological role, ligates lysine onto the cytidine present at position 34 of the AUA codon-specific tRNA(Ile) that contains the anticodon CAU, in an ATP-dependent manner. Cytidine is converted to lysidine, thus changing the amino acid specificity of the tRNA from methionine to isoleucine. In Salmonella paratyphi A (strain ATCC 9150 / SARB42), this protein is tRNA(Ile)-lysidine synthase.